The primary structure comprises 112 residues: ATP synthase subunit c (112 aa).

2 consecutive transmembrane segments (helical) span residues 36–56 (FSVLAAGLGLGVAALGGAIGM) and 81–101 (MFIALAMIEAQVIYALVIALI).

Belongs to the ATPase C chain family. As to quaternary structure, F-type ATPases have 2 components, F(1) - the catalytic core - and F(0) - the membrane proton channel. F(1) has five subunits: alpha(3), beta(3), gamma(1), delta(1), epsilon(1). F(0) has three main subunits: a(1), b(2) and c(10-14). The alpha and beta chains form an alternating ring which encloses part of the gamma chain. F(1) is attached to F(0) by a central stalk formed by the gamma and epsilon chains, while a peripheral stalk is formed by the delta and b chains.

The protein localises to the cell inner membrane. In terms of biological role, f(1)F(0) ATP synthase produces ATP from ADP in the presence of a proton or sodium gradient. F-type ATPases consist of two structural domains, F(1) containing the extramembraneous catalytic core and F(0) containing the membrane proton channel, linked together by a central stalk and a peripheral stalk. During catalysis, ATP synthesis in the catalytic domain of F(1) is coupled via a rotary mechanism of the central stalk subunits to proton translocation. Functionally, key component of the F(0) channel; it plays a direct role in translocation across the membrane. A homomeric c-ring of between 10-14 subunits forms the central stalk rotor element with the F(1) delta and epsilon subunits. This Campylobacter jejuni (strain RM1221) protein is ATP synthase subunit c.